The chain runs to 122 residues: Small ribosomal subunit protein uS12c (122 aa).

Belongs to the universal ribosomal protein uS12 family. Part of the 30S ribosomal subunit.

Its subcellular location is the plastid. It localises to the chloroplast. Functionally, with S4 and S5 plays an important role in translational accuracy. Located at the interface of the 30S and 50S subunits. The polypeptide is Small ribosomal subunit protein uS12c (rps12) (Mesostigma viride (Green alga)).